The sequence spans 1166 residues: Peroxisomal ATPase PEX6 (1166 aa).

The protein belongs to the AAA ATPase family. In terms of assembly, interacts with PEX1; forming the PEX1-PEX6 AAA ATPase complex, which is composed of a heterohexamer formed by a trimer of PEX1-PEX6 dimers.

Its subcellular location is the membrane. It catalyses the reaction ATP + H2O = ADP + phosphate + H(+). Functionally, component of the PEX1-PEX6 AAA ATPase complex involved in peroxisome biosynthesis. The complex acts as a protein dislocase complex that mediates the ATP-dependent extraction of the PEX5 receptor from peroxisomal membranes, an essential step for PEX5 recycling. Specifically recognizes PEX5 monoubiquitinated at 'Cys-6', and pulls it out of the peroxisome lumen through the PEX2-PEX10-PEX12 retrotranslocation channel. Extraction by the PEX1-PEX6 AAA ATPase complex is accompanied by unfolding of the TPR repeats and release of bound cargo from PEX5. The polypeptide is Peroxisomal ATPase PEX6 (Komagataella phaffii (strain GS115 / ATCC 20864) (Yeast)).